The chain runs to 532 residues: 2,3-bisphosphoglycerate-independent phosphoglycerate mutase (532 aa).

Mn(2+)-binding residues include aspartate 15 and serine 65. The active-site Phosphoserine intermediate is the serine 65. Residues histidine 126, arginine 156–aspartate 157, arginine 188, arginine 194, arginine 258–arginine 261, and lysine 331 contribute to the substrate site. Aspartate 398, histidine 402, aspartate 439, histidine 440, and histidine 457 together coordinate Mn(2+).

It belongs to the BPG-independent phosphoglycerate mutase family. Monomer. Mn(2+) serves as cofactor.

The catalysed reaction is (2R)-2-phosphoglycerate = (2R)-3-phosphoglycerate. Its pathway is carbohydrate degradation; glycolysis; pyruvate from D-glyceraldehyde 3-phosphate: step 3/5. Functionally, catalyzes the interconversion of 2-phosphoglycerate and 3-phosphoglycerate. The protein is 2,3-bisphosphoglycerate-independent phosphoglycerate mutase of Rippkaea orientalis (strain PCC 8801 / RF-1) (Cyanothece sp. (strain PCC 8801)).